An 87-amino-acid polypeptide reads, in one-letter code: Large ribosomal subunit protein uL23c (87 aa).

It belongs to the universal ribosomal protein uL23 family. Part of the 50S ribosomal subunit.

It is found in the plastid. It localises to the chloroplast. In terms of biological role, binds to 23S rRNA. This chain is Large ribosomal subunit protein uL23c (rpl23), found in Ostreococcus tauri.